We begin with the raw amino-acid sequence, 389 residues long: Meiosis-specific protein MEI4 (389 aa).

The interaction with REC114 stretch occupies residues 1–127 (MDIQPWYLKT…LSQHFVESTD (127 aa)).

It belongs to the MEI4L family. Part of the MCD recombinosome complex, at least composed of IHO1, REC114 and MEI4. Forms a complex with REC114; the interaction is required for MEI4 stability. Interacts (via N-terminal domain) with REC114 (via C-terminal domain). Interacts with IHO1. Expressed in adult testis and brain and in embryonic ovary.

Its subcellular location is the chromosome. Functionally, required for DNA double-strand breaks (DSBs) formation in unsynapsed regions during meiotic recombination. Probably acts by forming a complex with IHO1 and REC114, which activates DSBs formation in unsynapsed regions, an essential step to ensure completion of synapsis. The chain is Meiosis-specific protein MEI4 from Mus musculus (Mouse).